The following is a 441-amino-acid chain: Putative cytochrome P450 138 (441 aa).

Cys388 is a heme binding site.

Belongs to the cytochrome P450 family. The cofactor is heme.

The protein is Putative cytochrome P450 138 (cyp138) of Mycobacterium bovis (strain ATCC BAA-935 / AF2122/97).